Consider the following 137-residue polypeptide: Ribosome-binding factor A (137 aa).

It belongs to the RbfA family. As to quaternary structure, monomer. Binds 30S ribosomal subunits, but not 50S ribosomal subunits or 70S ribosomes.

It is found in the cytoplasm. One of several proteins that assist in the late maturation steps of the functional core of the 30S ribosomal subunit. Associates with free 30S ribosomal subunits (but not with 30S subunits that are part of 70S ribosomes or polysomes). Required for efficient processing of 16S rRNA. May interact with the 5'-terminal helix region of 16S rRNA. This is Ribosome-binding factor A from Rhodopseudomonas palustris (strain TIE-1).